The following is a 411-amino-acid chain: Flavohemoprotein (411 aa).

The Globin domain maps to threonine 5–lysine 142. Histidine 89 is a heme b binding site. Active-site charge relay system residues include tyrosine 99 and glutamate 141. Residues glycine 153–serine 411 form a reductase region. An FAD-binding FR-type domain is found at arginine 156–glutamine 267. Residues tyrosine 194 and arginine 210–serine 213 contribute to the FAD site. Glycine 280–proline 285 lines the NADP(+) pocket. Phenylalanine 401 to proline 404 lines the FAD pocket.

Belongs to the globin family. Two-domain flavohemoproteins subfamily. This sequence in the C-terminal section; belongs to the flavoprotein pyridine nucleotide cytochrome reductase family. Heme b is required as a cofactor. It depends on FAD as a cofactor.

The catalysed reaction is 2 nitric oxide + NADPH + 2 O2 = 2 nitrate + NADP(+) + H(+). It carries out the reaction 2 nitric oxide + NADH + 2 O2 = 2 nitrate + NAD(+) + H(+). Its function is as follows. Is involved in NO detoxification in an aerobic process, termed nitric oxide dioxygenase (NOD) reaction that utilizes O(2) and NAD(P)H to convert NO to nitrate, which protects the bacterium from various noxious nitrogen compounds. Therefore, plays a central role in the inducible response to nitrosative stress. This chain is Flavohemoprotein, found in Halalkalibacterium halodurans (strain ATCC BAA-125 / DSM 18197 / FERM 7344 / JCM 9153 / C-125) (Bacillus halodurans).